The chain runs to 38 residues: Photosystem II reaction center protein Y (38 aa).

Residues 2-20 form a helical membrane-spanning segment; it reads ILIVLLPILLAATWAFINI.

The protein belongs to the PsbY family. As to quaternary structure, PSII is composed of 1 copy each of membrane proteins PsbA, PsbB, PsbC, PsbD, PsbE, PsbF, PsbH, PsbI, PsbJ, PsbK, PsbL, PsbM, PsbT, PsbX, PsbY, Psb30/Ycf12, peripheral proteins PsbO, CyanoQ (PsbQ), PsbU, PsbV and a large number of cofactors. It forms dimeric complexes.

The protein localises to the cellular thylakoid membrane. Functionally, loosely associated component of the core of photosystem II (PSII), it is not always seen in crystals. PSII is a light-driven water plastoquinone oxidoreductase, using light energy to abstract electrons from H(2)O, generating a proton gradient subsequently used for ATP formation. The sequence is that of Photosystem II reaction center protein Y from Prochlorococcus marinus (strain MIT 9313).